Here is a 137-residue protein sequence, read N- to C-terminus: Small ribosomal subunit protein uS11 (137 aa).

The span at 1 to 10 (MPPKSRSTGP) shows a compositional bias: polar residues. 2 disordered regions span residues 1 to 27 (MPPKSRSTGPKKTQKTRRRDKKNIPHG) and 116 to 137 (GTISDVTPQPHNGCRPPKRRRV). Basic residues predominate over residues 12–21 (KTQKTRRRDK).

Belongs to the universal ribosomal protein uS11 family. In terms of assembly, part of the 30S ribosomal subunit. Interacts with proteins S7 and S18. Binds to IF-3.

Its function is as follows. Located on the platform of the 30S subunit, it bridges several disparate RNA helices of the 16S rRNA. Forms part of the Shine-Dalgarno cleft in the 70S ribosome. The polypeptide is Small ribosomal subunit protein uS11 (Rhodococcus erythropolis (strain PR4 / NBRC 100887)).